The primary structure comprises 302 residues: Ventral anterior homeobox 2a (302 aa).

5 disordered regions span residues 1–35 (MFDQATSMGDGVSEERSPLCGKSATSCSERVRDKG), 50–73 (KDIPVTSTSSPGSSKEEVQDSQST), 156–175 (RRTKQKKDQSRDSEKRSSST), 199–223 (PPNLISSSQNNMGTSSGNGTNLGTS), and 282–302 (AFEPYTRLDRKDTASSKKSTS). The homeobox DNA-binding region spans 105 to 164 (PKRTRTSFTAEQLYRLELEFQRCQYVVGRERTELARQLNLSETQVKVWFQNRRTKQKKDQ). A compositionally biased stretch (basic and acidic residues) spans 161–172 (KKDQSRDSEKRS). Positions 204–223 (SSSQNNMGTSSGNGTNLGTS) are enriched in low complexity. Over residues 287-296 (TRLDRKDTAS) the composition is skewed to basic and acidic residues.

This sequence belongs to the EMX homeobox family.

It localises to the nucleus. Functionally, transcription factor that may function in dorsoventral specification of the forebrain. Regulates the expression of Wnt signaling antagonists including the expression of a truncated tcf7l2 isoform that cannot bind ctnnb1 and acts therefore as a potent dominant-negative Wnt antagonist. Plays a crucial role in eye development and, in particular, in the specification of the ventral optic vesicle. May be a regulator of axial polarization in the retina. The sequence is that of Ventral anterior homeobox 2a (vax2-a) from Xenopus laevis (African clawed frog).